The chain runs to 478 residues: Glycogen synthase (478 aa).

An ADP-alpha-D-glucose-binding site is contributed by Lys-15.

The protein belongs to the glycosyltransferase 1 family. Bacterial/plant glycogen synthase subfamily.

It catalyses the reaction [(1-&gt;4)-alpha-D-glucosyl](n) + ADP-alpha-D-glucose = [(1-&gt;4)-alpha-D-glucosyl](n+1) + ADP + H(+). It functions in the pathway glycan biosynthesis; glycogen biosynthesis. Its function is as follows. Synthesizes alpha-1,4-glucan chains using ADP-glucose. The sequence is that of Glycogen synthase from Enterobacter sp. (strain 638).